A 628-amino-acid polypeptide reads, in one-letter code: 1-deoxy-D-xylulose-5-phosphate synthase (628 aa).

Residues histidine 72 and 113–115 (GHA) contribute to the thiamine diphosphate site. Mg(2+) is bound at residue aspartate 144. Thiamine diphosphate is bound by residues 145–146 (GA), asparagine 174, tyrosine 287, and glutamate 370. Mg(2+) is bound at residue asparagine 174.

This sequence belongs to the transketolase family. DXPS subfamily. Homodimer. Requires Mg(2+) as cofactor. Thiamine diphosphate serves as cofactor.

It carries out the reaction D-glyceraldehyde 3-phosphate + pyruvate + H(+) = 1-deoxy-D-xylulose 5-phosphate + CO2. It functions in the pathway metabolic intermediate biosynthesis; 1-deoxy-D-xylulose 5-phosphate biosynthesis; 1-deoxy-D-xylulose 5-phosphate from D-glyceraldehyde 3-phosphate and pyruvate: step 1/1. Its function is as follows. Catalyzes the acyloin condensation reaction between C atoms 2 and 3 of pyruvate and glyceraldehyde 3-phosphate to yield 1-deoxy-D-xylulose-5-phosphate (DXP). The chain is 1-deoxy-D-xylulose-5-phosphate synthase from Prochlorococcus marinus (strain NATL2A).